We begin with the raw amino-acid sequence, 150 residues long: Ribonuclease pancreatic delta-type (150 aa).

An N-terminal signal peptide occupies residues 1–25 (MGLEKSFILFSLLVLVLGWVQPSLG). Substrate is bound at residue Arg35. His37 functions as the Proton acceptor in the catalytic mechanism. 4 disulfide bridges follow: Cys51/Cys110, Cys65/Cys121, Cys83/Cys136, and Cys90/Cys98. Substrate contacts are provided by residues 66–70 (KRVNT), Lys91, and Arg111. His145 acts as the Proton donor in catalysis.

Belongs to the pancreatic ribonuclease family. As to quaternary structure, monomer.

Its subcellular location is the secreted. The enzyme catalyses an [RNA] containing cytidine + H2O = an [RNA]-3'-cytidine-3'-phosphate + a 5'-hydroxy-ribonucleotide-3'-[RNA].. It carries out the reaction an [RNA] containing uridine + H2O = an [RNA]-3'-uridine-3'-phosphate + a 5'-hydroxy-ribonucleotide-3'-[RNA].. Its function is as follows. Endonuclease that catalyzes the cleavage of RNA on the 3' side of pyrimidine nucleotides. Acts on single-stranded and double-stranded RNA. This Rattus norvegicus (Rat) protein is Ribonuclease pancreatic delta-type (Rnase1d).